Here is a 536-residue protein sequence, read N- to C-terminus: Light-independent protochlorophyllide reductase subunit B (536 aa).

D36 serves as a coordination point for [4Fe-4S] cluster. D292 acts as the Proton donor in catalysis. Residue 427–428 (GL) participates in substrate binding. A disordered region spans residues 447-489 (QSHLGHLGGHQSQTEQQQSQAATNPSTQSNTDSSSEESPLWTP). Residues 448 to 469 (SHLGHLGGHQSQTEQQQSQAAT) show a composition bias toward low complexity. The span at 470–483 (NPSTQSNTDSSSEE) shows a compositional bias: polar residues.

It belongs to the ChlB/BchB/BchZ family. As to quaternary structure, protochlorophyllide reductase is composed of three subunits; ChlL, ChlN and ChlB. Forms a heterotetramer of two ChlB and two ChlN subunits. Requires [4Fe-4S] cluster as cofactor.

The catalysed reaction is chlorophyllide a + oxidized 2[4Fe-4S]-[ferredoxin] + 2 ADP + 2 phosphate = protochlorophyllide a + reduced 2[4Fe-4S]-[ferredoxin] + 2 ATP + 2 H2O. It participates in porphyrin-containing compound metabolism; chlorophyll biosynthesis (light-independent). Component of the dark-operative protochlorophyllide reductase (DPOR) that uses Mg-ATP and reduced ferredoxin to reduce ring D of protochlorophyllide (Pchlide) to form chlorophyllide a (Chlide). This reaction is light-independent. The NB-protein (ChlN-ChlB) is the catalytic component of the complex. This is Light-independent protochlorophyllide reductase subunit B from Prochlorococcus marinus (strain MIT 9303).